Reading from the N-terminus, the 85-residue chain is Dynein light chain 1, cytoplasmic (85 aa).

Belongs to the dynein light chain family. Homodimer. Cytoplasmic dynein consists of two catalytic heavy chains (HCs) and a number of non-catalytic subunits which present intermediate chains (ICs), light intermediate chains (LICs) and light chains (LCs). Component of the nuclear pore complex (NPC). NPC constitutes the exclusive means of nucleocytoplasmic transport. NPCs allow the passive diffusion of ions and small molecules and the active, nuclear transport receptor-mediated bidirectional transport of macromolecules such as proteins, RNAs, ribonucleoparticles (RNPs), and ribosomal subunits across the nuclear envelope. Due to its 8-fold rotational symmetry, all subunits are present with 8 copies or multiples thereof.

It is found in the cytoplasm. Its subcellular location is the cytoskeleton. It localises to the nucleus. The protein resides in the nuclear pore complex. In terms of biological role, acts as one of several non-catalytic accessory components of the cytoplasmic dynein complex that are thought to be involved in linking dynein to cargos and to adapter proteins that regulate dynein function. Cytoplasmic dynein 1 acts as a motor for the intracellular retrograde motility of vesicles and organelles along microtubules. May play a role in changing or maintaining the spatial distribution of cytoskeletal structures. Also a component of the nuclear pore complex. This chain is Dynein light chain 1, cytoplasmic (dlc2), found in Schizosaccharomyces pombe (strain 972 / ATCC 24843) (Fission yeast).